The following is a 133-amino-acid chain: Small ribosomal subunit protein uS8 (133 aa).

The protein belongs to the universal ribosomal protein uS8 family. As to quaternary structure, part of the 30S ribosomal subunit. Contacts proteins S5 and S12.

Functionally, one of the primary rRNA binding proteins, it binds directly to 16S rRNA central domain where it helps coordinate assembly of the platform of the 30S subunit. The chain is Small ribosomal subunit protein uS8 from Chloroflexus aurantiacus (strain ATCC 29364 / DSM 637 / Y-400-fl).